The following is a 79-amino-acid chain: MAIRVSHKSFLVALLLILFISSPTQARSLREVVRNRTLLVVEKSQESRKIRHEGGGSDVDGLMDMDYNSANKKRPIHNR.

Positions 1-26 (MAIRVSHKSFLVALLLILFISSPTQA) are cleaved as a signal peptide. A propeptide spanning residues 27-65 (RSLREVVRNRTLLVVEKSQESRKIRHEGGGSDVDGLMDM) is cleaved from the precursor. The disordered stretch occupies residues 49–79 (KIRHEGGGSDVDGLMDMDYNSANKKRPIHNR). Tyr67 is modified (sulfotyrosine). The residue at position 75 (Pro75) is a Hydroxyproline.

The protein belongs to the RGF family. As to quaternary structure, binds to LRR receptor-like serine/threonine-protein kinases to trigger their dimerization with SERK proteins and subsequent signaling. Expressed in siliques, stems, hypocotyls, shoot apex, leaves, flowers and cotyledons, and, to a lower extent, in roots.

It is found in the secreted. Its subcellular location is the endoplasmic reticulum. Functionally, signaling peptide (root growth factor) that regulates the pattern of root growth and lateral root development by modulating the length and the number of cortical cells in the root apical meristem (RAM), and the anticlinal asymmetric cell divisions in lateral root initiation cells. Also involved in the regulation of hypocotyl bending and root gravitropism, probably by influencing the formation of auxin gradients. Maintains the postembryonic root stem cell niche. This is Protein GOLVEN 2 from Arabidopsis thaliana (Mouse-ear cress).